Here is an 834-residue protein sequence, read N- to C-terminus: Arf-GAP with coiled-coil, ANK repeat and PH domain-containing protein 3 (834 aa).

A PH domain is found at glycine 268 to alanine 363. Residues serine 375–valine 400 form a disordered region. The span at alanine 382–alanine 392 shows a compositional bias: polar residues. The region spanning glutamate 403–proline 525 is the Arf-GAP domain. The C4-type zinc-finger motif lies at cysteine 418–cysteine 441. The interval serine 633–threonine 653 is disordered. Acidic residues predominate over residues valine 634–threonine 653. ANK repeat units follow at residues glutamate 702–glutamine 731, arginine 735–alanine 764, and glutamate 768–methionine 797.

GTPase-activating protein for the ADP ribosylation factor family. The sequence is that of Arf-GAP with coiled-coil, ANK repeat and PH domain-containing protein 3 (ACAP3) from Homo sapiens (Human).